The following is a 241-amino-acid chain: Biosynthetic peptidoglycan transglycosylase (241 aa).

The chain crosses the membrane as a helical span at residues 18–38 (GVIGIIALWMAGILIFAFLPV).

This sequence belongs to the glycosyltransferase 51 family.

It localises to the cell inner membrane. The enzyme catalyses [GlcNAc-(1-&gt;4)-Mur2Ac(oyl-L-Ala-gamma-D-Glu-L-Lys-D-Ala-D-Ala)](n)-di-trans,octa-cis-undecaprenyl diphosphate + beta-D-GlcNAc-(1-&gt;4)-Mur2Ac(oyl-L-Ala-gamma-D-Glu-L-Lys-D-Ala-D-Ala)-di-trans,octa-cis-undecaprenyl diphosphate = [GlcNAc-(1-&gt;4)-Mur2Ac(oyl-L-Ala-gamma-D-Glu-L-Lys-D-Ala-D-Ala)](n+1)-di-trans,octa-cis-undecaprenyl diphosphate + di-trans,octa-cis-undecaprenyl diphosphate + H(+). It functions in the pathway cell wall biogenesis; peptidoglycan biosynthesis. Peptidoglycan polymerase that catalyzes glycan chain elongation from lipid-linked precursors. In Yersinia pseudotuberculosis serotype O:3 (strain YPIII), this protein is Biosynthetic peptidoglycan transglycosylase.